We begin with the raw amino-acid sequence, 249 residues long: MFSSLRLAISFLTIFPFYNKMADNKELAQSVSYYPLVGFLLGSIAAGVCYAMHSIGLNLAADVLGLVTIITLTGGLHQDGLMDTADGIFSGRELHRKLEIMKDSRVGAMGVIALATVLLLKIAFLFELDLAQKLTAFIMAPMAGRWAMVLAITRYPYARATGGLGACLKQAGKTQLALATLILVAGCLWLFGLPGLALLGIVFFITWLTVEFIVKRLGGMTGDTYGALGEMIETWVIFLILLGQQIRML.

6 helical membrane-spanning segments follow: residues 36–56 (LVGF…HSIG), 57–77 (LNLA…GGLH), 106–126 (VGAM…AFLF), 133–153 (KLTA…LAIT), 188–208 (LWLF…ITWL), and 226–246 (GALG…GQQI).

This sequence belongs to the CobS family. The cofactor is Mg(2+).

It localises to the cell membrane. It carries out the reaction alpha-ribazole + adenosylcob(III)inamide-GDP = adenosylcob(III)alamin + GMP + H(+). The catalysed reaction is alpha-ribazole 5'-phosphate + adenosylcob(III)inamide-GDP = adenosylcob(III)alamin 5'-phosphate + GMP + H(+). It functions in the pathway cofactor biosynthesis; adenosylcobalamin biosynthesis; adenosylcobalamin from cob(II)yrinate a,c-diamide: step 7/7. Its function is as follows. Joins adenosylcobinamide-GDP and alpha-ribazole to generate adenosylcobalamin (Ado-cobalamin). Also synthesizes adenosylcobalamin 5'-phosphate from adenosylcobinamide-GDP and alpha-ribazole 5'-phosphate. This is Adenosylcobinamide-GDP ribazoletransferase from Desulforamulus reducens (strain ATCC BAA-1160 / DSM 100696 / MI-1) (Desulfotomaculum reducens).